The chain runs to 371 residues: Photosynthetic reaction center cytochrome c subunit (371 aa).

Heme is bound by residues Met-114, Cys-127, Cys-130, His-131, Met-153, His-167, Cys-178, Cys-181, His-182, Met-267, Cys-278, Cys-281, His-282, Cys-339, Cys-342, and His-343.

As to quaternary structure, component of the photosynthetic reaction center composed of protein subunits L (PufL), M (PufM), H (PuhA) and cytochrome C (PufC). The reaction center interacts with light-harvesting antenna complex LH1. In terms of processing, binds 4 heme groups per subunit.

The protein localises to the cellular chromatophore membrane. In terms of biological role, the reaction center of purple bacteria contains a tightly bound cytochrome molecule which re-reduces the photo oxidized primary electron donor. The chain is Photosynthetic reaction center cytochrome c subunit (pufC) from Roseobacter denitrificans (strain ATCC 33942 / OCh 114) (Erythrobacter sp. (strain OCh 114)).